Consider the following 500-residue polypeptide: RASPPSESRAPLRAPQRSATRQHQARQGPRRMCNGGRGPPYWTAGVTSAPARQTPLFSGRPSGGLSDPNEVAAVILGGGTGTQLFPLTSTRATPAVPIGGCYRLIDIPMSNCFNSGINKIFVMTQFNSASLNRHIHRTYLGGGINFTDGSVEVLAATQMPGEAAGWFRGTADAWRKIIWVLEDYYKNKSIEHILILSGDQLYRMDYMELVQKHVDDNADITLSCAPVGESRASEYGLVKFDSSGRVVQFSEQPKGDDLEAMKVDTSFLNFAIDDPAKYPYIASMGVYVFKRDVLLNLLKSRYAELHDFGSEILPRALHDHNVQAYVFTDYWEDIGTIRSFFDANRALCEQPPKFEFYDPKTPFFTSPRYLPPTKSDKCRIKEAIILHGCFLRECKIEHTAFSRLNSGSELKNAMMMGADSYETEDEMSRLMSEGKVPIGVGENTKISNCIIDMNARIGRDVVISNKEGVQEADRPEEGYYIRSGIVVIQKNATIKDGTVV.

Residues 1–33 (RASPPSESRAPLRAPQRSATRQHQARQGPRRMC) constitute a chloroplast transit peptide. Positions 1-47 (RASPPSESRAPLRAPQRSATRQHQARQGPRRMCNGGRGPPYWTAGVT) are disordered.

This sequence belongs to the bacterial/plant glucose-1-phosphate adenylyltransferase family. In terms of assembly, heterotetramer.

It is found in the plastid. Its subcellular location is the chloroplast. The protein resides in the amyloplast. The enzyme catalyses alpha-D-glucose 1-phosphate + ATP + H(+) = ADP-alpha-D-glucose + diphosphate. The protein operates within glycan biosynthesis; starch biosynthesis. Insensitive to 3'phosphoglycerate and orthophosphate. In terms of biological role, this protein plays a role in synthesis of starch. It catalyzes the synthesis of the activated glycosyl donor, ADP-glucose from Glc-1-P and ATP. The protein is Glucose-1-phosphate adenylyltransferase large subunit, chloroplastic/amyloplastic (AGA.7) of Triticum aestivum (Wheat).